We begin with the raw amino-acid sequence, 712 residues long: MAYGRRYWRRRRWRRRGGRWWRRRRPWKTRWRRRRRRWRRRRYGRRARRFRRRHRVGRWRKLFRRVKSRVVRQWDPNVTRRCMINGYDHALFWGQQAQHRILYDNLPWPIKKEGTQEGGSMNMMQLTLQFLYKDNLAGRNRWTRSNWDMDLAKYHETTLLFPRHRNYSYVVFITRGPNDILDEHTYPGLHPEKMLGRRKKIVVWSKDLRPHGKNYIRVRVPPPQVFKNQWYFQRDICQMPILTLGFAAFDPVNVTLAGNMANSSIILWGIPYWSRPMPYNTWYDYWTKCAGPQNIPWSDRQTNIAAGITQKSAQTCLKLKNKHFGLTNTAIVSDYDKDNIDKNTKQIKTIVMSLNRWYPKWPMKWKDAGDINTQTPFPYRYSWREDQGWGNKVRLWTRECRTDIPEETLGIENMPLYVLMNGYIDYVTNHSTHSPLNWVVSVFCPYTDPPMTNVIPVGKDWFIQNVEPGENKYPSDNADNTFAPGEKTKIKNYDSSKDEFTGNVIRAPDVYDSLPAQQALYIASPFSLKWAQTTGSIVFFYQSKWTWGGDFPRQRPIIDPCNRPKWGGLPVTGYDETGLLLQNPEKAEARARGHLGDLRRGDLTKTALKRLMELTSTEEGSPQKKKRRDKEVRTTADLLRPEDVYCWMSPTPETPPKAGKTPESSFAETYDNHTKLAKRVKKEIHNQNRRHRLLLAHLRRERDRLLGHHLLR.

Disordered stretches follow at residues 614-633 (LTST…KEVR) and 646-665 (CWMS…PESS). Residues 670-706 (YDNHTKLAKRVKKEIHNQNRRHRLLLAHLRRERDRLL) are a coiled coil.

Belongs to the anelloviridae capsid protein family.

Its subcellular location is the virion. Its function is as follows. Self-assembles to form an icosahedral capsid with a T=1 symmetry, about 30 nm in diameter, and consisting of 60 capsid proteins. The capsid encapsulates the genomic DNA. Capsid protein is involved in attachment and entry into the host cell. The protein is Capsid protein of Torque teno tamarin virus (isolate So-TTV2).